The chain runs to 171 residues: 3-hydroxydecanoyl-[acyl-carrier-protein] dehydratase (171 aa).

H70 is an active-site residue.

It belongs to the thioester dehydratase family. FabA subfamily. Homodimer.

It is found in the cytoplasm. It carries out the reaction a (3R)-hydroxyacyl-[ACP] = a (2E)-enoyl-[ACP] + H2O. The enzyme catalyses (3R)-hydroxydecanoyl-[ACP] = (2E)-decenoyl-[ACP] + H2O. It catalyses the reaction (2E)-decenoyl-[ACP] = (3Z)-decenoyl-[ACP]. Its pathway is lipid metabolism; fatty acid biosynthesis. In terms of biological role, necessary for the introduction of cis unsaturation into fatty acids. Catalyzes the dehydration of (3R)-3-hydroxydecanoyl-ACP to E-(2)-decenoyl-ACP and then its isomerization to Z-(3)-decenoyl-ACP. Can catalyze the dehydratase reaction for beta-hydroxyacyl-ACPs with saturated chain lengths up to 16:0, being most active on intermediate chain length. The protein is 3-hydroxydecanoyl-[acyl-carrier-protein] dehydratase of Stenotrophomonas maltophilia (strain R551-3).